The chain runs to 104 residues: Ribonuclease P protein component 4 (104 aa).

Zn(2+) contacts are provided by C57, C60, C83, and C86.

Belongs to the eukaryotic/archaeal RNase P protein component 4 family. As to quaternary structure, consists of a catalytic RNA component and at least 4-5 protein subunits. It depends on Zn(2+) as a cofactor.

It localises to the cytoplasm. The catalysed reaction is Endonucleolytic cleavage of RNA, removing 5'-extranucleotides from tRNA precursor.. Functionally, part of ribonuclease P, a protein complex that generates mature tRNA molecules by cleaving their 5'-ends. This chain is Ribonuclease P protein component 4, found in Saccharolobus islandicus (strain M.16.27) (Sulfolobus islandicus).